Consider the following 425-residue polypeptide: Kynurenine/alpha-aminoadipate aminotransferase, mitochondrial (425 aa).

The transit peptide at 1–29 directs the protein to the mitochondrion; the sequence is MNYARFITATSAARKPSTIRVMTEILSKA. Arg20 contributes to the substrate binding site. Lys69 bears the N6-acetyllysine mark. Residues Tyr74 and Tyr142 each contribute to the substrate site. A disordered region spans residues 178–208; that stretch reads WKPEDSKNPKKNSPKFLYTVPNGNNPSGNSL. Lys179 carries the post-translational modification N6-acetyllysine. Polar residues predominate over residues 198–208; it reads PNGNNPSGNSL. Asn202 is a substrate binding site. Lys263 is modified (N6-(pyridoxal phosphate)lysine; alternate). Lys263 and Lys339 each carry N6-acetyllysine; alternate. Lys263 and Lys339 each carry N6-succinyllysine; alternate. Arg399 lines the substrate pocket. Residue Lys422 is modified to N6-acetyllysine.

The protein belongs to the class-I pyridoxal-phosphate-dependent aminotransferase family. In terms of assembly, homodimer. Pyridoxal 5'-phosphate is required as a cofactor.

Its subcellular location is the mitochondrion. The catalysed reaction is L-kynurenine + 2-oxoglutarate = kynurenate + L-glutamate + H2O. The enzyme catalyses L-2-aminoadipate + 2-oxoglutarate = 2-oxoadipate + L-glutamate. It carries out the reaction glycine + 2-oxoglutarate = glyoxylate + L-glutamate. It catalyses the reaction L-kynurenine + glyoxylate = kynurenate + glycine + H2O. The catalysed reaction is 3-hydroxy-L-kynurenine + glyoxylate = xanthurenate + glycine + H2O. The enzyme catalyses 2-oxohexanoate + L-kynurenine = L-2-aminohexanoate + kynurenate + H2O. It carries out the reaction 3-phenylpyruvate + L-kynurenine = kynurenate + L-phenylalanine + H2O. It catalyses the reaction 4-methylsulfanyl-2-oxobutanoate + L-kynurenine = kynurenate + L-methionine + H2O. The catalysed reaction is 2-oxo-3-sulfanylpropanoate + L-kynurenine = kynurenate + L-cysteine + H2O. The enzyme catalyses indole-3-pyruvate + L-kynurenine = kynurenate + L-tryptophan + H2O. It carries out the reaction 2-oxopentanoate + L-kynurenine = L-2-aminopentanoate + kynurenate + H2O. It catalyses the reaction 4-methyl-2-oxopentanoate + L-kynurenine = kynurenate + L-leucine + H2O. The catalysed reaction is glyoxylate + L-methionine = 4-methylsulfanyl-2-oxobutanoate + glycine. The enzyme catalyses L-2-aminoadipate + glyoxylate = 2-oxoadipate + glycine. It carries out the reaction L-tyrosine + glyoxylate = 3-(4-hydroxyphenyl)pyruvate + glycine. It catalyses the reaction glyoxylate + L-phenylalanine = 3-phenylpyruvate + glycine. The catalysed reaction is L-tryptophan + glyoxylate = indole-3-pyruvate + glycine. The enzyme catalyses L-leucine + glyoxylate = 4-methyl-2-oxopentanoate + glycine. It carries out the reaction 2-oxobutanoate + L-kynurenine = (2S)-2-aminobutanoate + kynurenate + H2O. It catalyses the reaction 2-oxoadipate + L-kynurenine = L-2-aminoadipate + kynurenate + H2O. Its pathway is amino-acid degradation; L-lysine degradation via saccharopine pathway; glutaryl-CoA from L-lysine: step 4/6. In terms of biological role, transaminase with broad substrate specificity. Has transaminase activity towards aminoadipate, kynurenine, methionine and glutamate. Shows activity also towards tryptophan, aspartate and hydroxykynurenine. Accepts a variety of oxo-acids as amino-group acceptors, with a preference for 2-oxoglutarate, 2-oxocaproic acid, phenylpyruvate and alpha-oxo-gamma-methiol butyric acid. Can also use glyoxylate as amino-group acceptor (in vitro). The protein is Kynurenine/alpha-aminoadipate aminotransferase, mitochondrial of Bos taurus (Bovine).